The primary structure comprises 1461 residues: A disintegrin and metalloproteinase with thrombospondin motifs adt-1 (1461 aa).

A signal peptide spans 1-21; it reads MPPFYIVITFLLSTVFRISQS. Residues 22 to 163 constitute a propeptide that is removed on maturation; it reads VHHHLNEEEL…HLQKERHLVY (142 aa). N-linked (GlcNAc...) asparagine glycosylation is present at Asn69. The short motif at 190-197 is the Cysteine switch element; the sequence is SFCDTSEQ. The N-linked (GlcNAc...) asparagine glycan is linked to Asn212. The 203-residue stretch at 233-435 folds into the Peptidase M12B domain; it reads ITLEIGLFLD…CSVREFNAFL (203 aa). His388 is a binding site for Zn(2+). Glu389 is a catalytic residue. The Zn(2+) site is built by His392 and His398. Cys405 and Cys410 form a disulfide bridge. The 83-residue stretch at 464–546 folds into the Disintegrin domain; sequence RLPGQRFTAD…TFGLTPVPID (83 aa). TSP type-1 domains follow at residues 708–759, 761–802, 804–852, 853–898, 903–952, 955–1000, 1035–1083, 1087–1133, 1148–1200, 1203–1260, 1265–1321, 1324–1378, and 1382–1435; these read HQWE…RDCE, FGEW…RPCD, EGCW…QKCI, SQSW…QQCP, LSVW…GPCE, YLTW…IACL, SIHS…NSCL, IWSD…PSCS, APRW…GSCS, AGGW…NVCS, DGGW…ARCH, DGGW…PACD, and DGEW…RQSP. 3 disulfide bridges follow: Cys719-Cys751, Cys723-Cys758, and Cys735-Cys741. Cystine bridges form between Cys816–Cys846, Cys820–Cys851, Cys831–Cys836, Cys862–Cys892, Cys866–Cys897, and Cys877–Cys882. 3 disulfides stabilise this stretch: Cys1047-Cys1077, Cys1051-Cys1082, and Cys1062-Cys1067. Disulfide bonds link Cys1160-Cys1194, Cys1162-Cys1199, Cys1173-Cys1184, Cys1215-Cys1253, Cys1219-Cys1259, Cys1231-Cys1243, Cys1277-Cys1314, Cys1281-Cys1320, Cys1292-Cys1304, Cys1336-Cys1372, Cys1340-Cys1377, and Cys1351-Cys1362.

Zn(2+) serves as cofactor. In hermaphrodites, expressed in the vulva, head ganglia, ventral nerve cord and amphid neurons. Expressed in the rays of the male tail.

The protein localises to the secreted. In terms of biological role, plays a role in ray morphogenesis in the male tail, probably by remodeling the extracellular matrix (ECM) in the cuticle. The protein is A disintegrin and metalloproteinase with thrombospondin motifs adt-1 of Caenorhabditis elegans.